Reading from the N-terminus, the 293-residue chain is uncharacterized protein (293 aa).

This sequence to M.jannaschii MJ1614 and MJ0008.

This is an uncharacterized protein from Methanocaldococcus jannaschii (strain ATCC 43067 / DSM 2661 / JAL-1 / JCM 10045 / NBRC 100440) (Methanococcus jannaschii).